The chain runs to 223 residues: Cytidylate kinase (223 aa).

12–20 (GPSGVGKGT) lines the ATP pocket.

The protein belongs to the cytidylate kinase family. Type 1 subfamily.

Its subcellular location is the cytoplasm. It carries out the reaction CMP + ATP = CDP + ADP. The catalysed reaction is dCMP + ATP = dCDP + ADP. This chain is Cytidylate kinase, found in Xylella fastidiosa (strain M23).